Consider the following 187-residue polypeptide: Elongation factor P (187 aa).

Belongs to the elongation factor P family.

The protein resides in the cytoplasm. The protein operates within protein biosynthesis; polypeptide chain elongation. Involved in peptide bond synthesis. Stimulates efficient translation and peptide-bond synthesis on native or reconstituted 70S ribosomes in vitro. Probably functions indirectly by altering the affinity of the ribosome for aminoacyl-tRNA, thus increasing their reactivity as acceptors for peptidyl transferase. This Rhizorhabdus wittichii (strain DSM 6014 / CCUG 31198 / JCM 15750 / NBRC 105917 / EY 4224 / RW1) (Sphingomonas wittichii) protein is Elongation factor P.